The chain runs to 265 residues: Homeobox protein Nkx-6.3 (265 aa).

A DNA-binding region (homeobox) is located at residues 139-198 (KKHTRPTFTGHQIFALEKTFEQTKYLAGPERARLAYSLGMTESQVKVWFQNRRTKWRKKS). The interval 196 to 240 (KKSALEPSSSTPRAPGGAGAGAGGDRAPSENEDDEYNKPLDPDSD) is disordered.

The protein resides in the nucleus. Functionally, putative transcription factor, which may be involved in patterning of central nervous system and pancreas. In Homo sapiens (Human), this protein is Homeobox protein Nkx-6.3 (NKX6-3).